The sequence spans 320 residues: MTYTYLHNKFLSIIPKYKNLIKPLSILIALSGGKDSLCLVKLIEDFNNTYNHFSRIEYIYIDHQWRSDSKQNIKHLLNYISITNNNTYIYQINKMEISEANMRNIRYQAIVRHAIQNSHDIIVTGHNQTDQVETFLLNLMRGTGLEGLSSLPYIRKITDQIQVIRPLIHINTGDVLWFCRKFNLPIWSDKTNFYYTNFRNRIRYELLPYLKEYFHPKIESNIINFLSLSSIENEYIKQNSIKLYLASRHSHYIAINYKIIKNQHLALQKRVLNIFFYHNFNKYVNSHILNQLIKMKYQRKLTIVWETLRIKIYKNWIYIQ.

S31–S36 contacts ATP.

This sequence belongs to the tRNA(Ile)-lysidine synthase family.

It is found in the plastid. The protein localises to the chloroplast. It catalyses the reaction cytidine(34) in tRNA(Ile2) + L-lysine + ATP = lysidine(34) in tRNA(Ile2) + AMP + diphosphate + H(+). Ligates lysine onto the cytidine present at position 34 of the AUA codon-specific tRNA(Ile) that contains the anticodon CAU, in an ATP-dependent manner. Cytidine is converted to lysidine, thus changing the amino acid specificity of the tRNA from methionine to isoleucine. The polypeptide is tRNA(Ile)-lysidine synthase, chloroplastic (Gracilaria tenuistipitata var. liui (Red alga)).